The primary structure comprises 522 residues: Ribonuclease Y (522 aa).

A helical transmembrane segment spans residues 3 to 23 (ELIMYILATAVVSIGVGIVAG). The region spanning 212–272 (CVSIFNIESD…VRREVARLSL (61 aa)) is the KH domain. In terms of domain architecture, HD spans 338 to 431 (LLQHSREVAK…VQVCDAISGA (94 aa)).

It belongs to the RNase Y family.

The protein localises to the cell membrane. Functionally, endoribonuclease that initiates mRNA decay. This Cytophaga hutchinsonii (strain ATCC 33406 / DSM 1761 / CIP 103989 / NBRC 15051 / NCIMB 9469 / D465) protein is Ribonuclease Y.